The primary structure comprises 406 residues: Lissencephaly-1 homolog (406 aa).

The region spanning 7 to 39 (QREELNKAIADYLRSNGYESALEAFQKEAEMPG) is the LisH domain. The stretch at 54-81 (TSVIRLQKKVMDLEAKLAEAEKEFQSGG) forms a coiled coil. The span at 74–89 (EKEFQSGGPNKKERSP) shows a compositional bias: basic and acidic residues. The tract at residues 74–99 (EKEFQSGGPNKKERSPSEWIPRPPAR) is disordered. 7 WD repeats span residues 104 to 145 (GHRS…RTLK), 146 to 185 (GHTDAVQDVSFDQQGKLLASCSADMTIKLWDFQTFENIKT), 188 to 227 (GHDHNVSSVHFMPNGDFLISASRDKTIKMWELATGYCVKT), 230 to 269 (GHREWVRTVRVNQDGSLLASCSNDQTVRVWVVANKECKAE), 272 to 329 (EHEH…CIMT), 332 to 371 (GHDNWVRGVVWHPGGKYIISASDDKTIRVWDYKNKRCQKT), and 374 to 406 (AHQHFCTSIDFHRSAPYVITGSVDQTVKVWECR).

The protein belongs to the WD repeat LIS1/nudF family.

The protein localises to the cytoplasm. Its subcellular location is the cytoskeleton. It is found in the microtubule organizing center. The protein resides in the centrosome. Its function is as follows. Positively regulates the activity of the minus-end directed microtubule motor protein dynein. May enhance dynein-mediated microtubule sliding by targeting dynein to the microtubule plus end. Required for several dynein- and microtubule-dependent processes. The polypeptide is Lissencephaly-1 homolog (Branchiostoma floridae (Florida lancelet)).